The following is a 714-amino-acid chain: Polyribonucleotide nucleotidyltransferase (714 aa).

Residues D487 and D493 each contribute to the Mg(2+) site. Residues 554-613 enclose the KH domain; it reads PRIETLKIPTDKIREVIGTGGKVIREIVEKTGAKINIEDDGTVKVASSDGNSIKAAIAWI. The 69-residue stretch at 623–691 folds into the S1 motif domain; sequence GQIYEGTVVK…DRGKVRLSMR (69 aa).

It belongs to the polyribonucleotide nucleotidyltransferase family. It depends on Mg(2+) as a cofactor.

It is found in the cytoplasm. The enzyme catalyses RNA(n+1) + phosphate = RNA(n) + a ribonucleoside 5'-diphosphate. Its function is as follows. Involved in mRNA degradation. Catalyzes the phosphorolysis of single-stranded polyribonucleotides processively in the 3'- to 5'-direction. In Methylocella silvestris (strain DSM 15510 / CIP 108128 / LMG 27833 / NCIMB 13906 / BL2), this protein is Polyribonucleotide nucleotidyltransferase.